A 304-amino-acid polypeptide reads, in one-letter code: UDP-3-O-acyl-N-acetylglucosamine deacetylase (304 aa).

The Zn(2+) site is built by histidine 78, histidine 237, and aspartate 241. The Proton donor role is filled by histidine 264.

Belongs to the LpxC family. Zn(2+) serves as cofactor.

It catalyses the reaction a UDP-3-O-[(3R)-3-hydroxyacyl]-N-acetyl-alpha-D-glucosamine + H2O = a UDP-3-O-[(3R)-3-hydroxyacyl]-alpha-D-glucosamine + acetate. It participates in glycolipid biosynthesis; lipid IV(A) biosynthesis; lipid IV(A) from (3R)-3-hydroxytetradecanoyl-[acyl-carrier-protein] and UDP-N-acetyl-alpha-D-glucosamine: step 2/6. Its function is as follows. Catalyzes the hydrolysis of UDP-3-O-myristoyl-N-acetylglucosamine to form UDP-3-O-myristoylglucosamine and acetate, the committed step in lipid A biosynthesis. This is UDP-3-O-acyl-N-acetylglucosamine deacetylase from Alcanivorax borkumensis (strain ATCC 700651 / DSM 11573 / NCIMB 13689 / SK2).